The chain runs to 170 residues: Ribosome maturation factor RimM (170 aa).

Positions 97–170 (HPDEYYWVDL…RIVVDWDPEF (74 aa)) constitute a PRC barrel domain.

The protein belongs to the RimM family. In terms of assembly, binds ribosomal protein uS19.

It is found in the cytoplasm. Functionally, an accessory protein needed during the final step in the assembly of 30S ribosomal subunit, possibly for assembly of the head region. Essential for efficient processing of 16S rRNA. May be needed both before and after RbfA during the maturation of 16S rRNA. It has affinity for free ribosomal 30S subunits but not for 70S ribosomes. This chain is Ribosome maturation factor RimM, found in Xylella fastidiosa (strain M23).